The following is a 225-amino-acid chain: Cytidylate kinase (225 aa).

11–19 (GPAAAGKST) is a binding site for ATP.

This sequence belongs to the cytidylate kinase family. Type 1 subfamily.

It localises to the cytoplasm. The catalysed reaction is CMP + ATP = CDP + ADP. It carries out the reaction dCMP + ATP = dCDP + ADP. The protein is Cytidylate kinase of Bacillus cereus (strain AH187).